The following is a 900-amino-acid chain: Translation initiation factor IF-2 (900 aa).

Residues 48-310 (HLNRDRGNAP…KPSSLQQSFN (263 aa)) are disordered. Over residues 68-82 (STLNVPSTGGKSKSV) the composition is skewed to polar residues. Composition is skewed to basic and acidic residues over residues 85–98 (EVRKTRTYVKRDPI) and 108–164 (QARR…KEKV). Polar residues predominate over residues 165–176 (TNQQNENMTKPA). Over residues 177-237 (QSEKAKREAE…SATKPEESAD (61 aa)) the composition is skewed to basic and acidic residues. Residues 263 to 277 (TRTRAAKVTKQKKGN) are compositionally biased toward basic residues. A compositionally biased stretch (basic and acidic residues) spans 278-291 (RQSESKADREEARA). A tr-type G domain is found at 399–568 (FRAPVVTIMG…LLQAEVLELK (170 aa)). The G1 stretch occupies residues 408-415 (GHVDHGKT). Residue 408 to 415 (GHVDHGKT) coordinates GTP. The G2 stretch occupies residues 433 to 437 (GITQH). The tract at residues 454–457 (DTPG) is G3. GTP contacts are provided by residues 454–458 (DTPGH) and 508–511 (NKID). Residues 508–511 (NKID) form a G4 region. The segment at 544 to 546 (SAK) is G5.

The protein belongs to the TRAFAC class translation factor GTPase superfamily. Classic translation factor GTPase family. IF-2 subfamily.

The protein localises to the cytoplasm. One of the essential components for the initiation of protein synthesis. Protects formylmethionyl-tRNA from spontaneous hydrolysis and promotes its binding to the 30S ribosomal subunits. Also involved in the hydrolysis of GTP during the formation of the 70S ribosomal complex. In Pectobacterium atrosepticum (strain SCRI 1043 / ATCC BAA-672) (Erwinia carotovora subsp. atroseptica), this protein is Translation initiation factor IF-2.